The sequence spans 143 residues: Aspartate 1-decarboxylase (143 aa).

The active-site Schiff-base intermediate with substrate; via pyruvic acid is serine 25. Serine 25 is subject to Pyruvic acid (Ser). Threonine 57 contributes to the substrate binding site. The active-site Proton donor is tyrosine 58. 73–75 serves as a coordination point for substrate; that stretch reads GAA.

It belongs to the PanD family. As to quaternary structure, heterooctamer of four alpha and four beta subunits. Requires pyruvate as cofactor. Post-translationally, is synthesized initially as an inactive proenzyme, which is activated by self-cleavage at a specific serine bond to produce a beta-subunit with a hydroxyl group at its C-terminus and an alpha-subunit with a pyruvoyl group at its N-terminus.

The protein localises to the cytoplasm. It catalyses the reaction L-aspartate + H(+) = beta-alanine + CO2. It functions in the pathway cofactor biosynthesis; (R)-pantothenate biosynthesis; beta-alanine from L-aspartate: step 1/1. In terms of biological role, catalyzes the pyruvoyl-dependent decarboxylation of aspartate to produce beta-alanine. The chain is Aspartate 1-decarboxylase from Mycolicibacterium paratuberculosis (strain ATCC BAA-968 / K-10) (Mycobacterium paratuberculosis).